A 483-amino-acid polypeptide reads, in one-letter code: Xylulose kinase (483 aa).

Residue 79 to 80 (MH) participates in substrate binding.

The protein belongs to the FGGY kinase family.

It carries out the reaction D-xylulose + ATP = D-xylulose 5-phosphate + ADP + H(+). Its function is as follows. Catalyzes the phosphorylation of D-xylulose to D-xylulose 5-phosphate. The sequence is that of Xylulose kinase from Staphylococcus xylosus.